We begin with the raw amino-acid sequence, 82 residues long: UPF0410 protein YeaQ (82 aa).

2 helical membrane-spanning segments follow: residues 26–46 and 57–77; these read GGGF…GGWI and GFNF…LFIY.

Belongs to the UPF0410 family.

It localises to the cell inner membrane. In Escherichia coli O157:H7, this protein is UPF0410 protein YeaQ (yeaQ).